The primary structure comprises 155 residues: Deoxyuridine 5'-triphosphate nucleotidohydrolase (155 aa).

Residues 74–76, N87, and 91–93 each bind substrate; these read RSG and TID.

This sequence belongs to the dUTPase family. Mg(2+) serves as cofactor.

The enzyme catalyses dUTP + H2O = dUMP + diphosphate + H(+). It participates in pyrimidine metabolism; dUMP biosynthesis; dUMP from dCTP (dUTP route): step 2/2. This enzyme is involved in nucleotide metabolism: it produces dUMP, the immediate precursor of thymidine nucleotides and it decreases the intracellular concentration of dUTP so that uracil cannot be incorporated into DNA. The sequence is that of Deoxyuridine 5'-triphosphate nucleotidohydrolase from Dinoroseobacter shibae (strain DSM 16493 / NCIMB 14021 / DFL 12).